Here is a 98-residue protein sequence, read N- to C-terminus: MSRVCELTGKAVLTGNNVSHANNKTKRRFLPNLCQVTLISDALNQRYRLRVSAAALRSVEHRGGLDAFLIKASENELSMRARLLRRQIVKKTAEAAAA.

It belongs to the bacterial ribosomal protein bL28 family.

The protein is Large ribosomal subunit protein bL28 of Rhizobium etli (strain ATCC 51251 / DSM 11541 / JCM 21823 / NBRC 15573 / CFN 42).